The primary structure comprises 348 residues: Nuclear receptor subfamily 1 group I member 3 (348 aa).

A DNA-binding region (nuclear receptor) is located at residues 8-83 (PRSCMVCGDR…AGMKKEMILS (76 aa)). The NR C4-type zinc finger occupies 11–31 (CMVCGDRATGYHFHALTCEGC). Phosphothreonine; by PKC is present on threonine 38. An NR C4-type zinc finger spans residues 47-71 (CPFAGSCKVNKAQRRHCPACRLQKC). The region spanning 109-348 (GQQELVQTLL…MMPLLQEICS (240 aa)) is the NR LBD domain.

It belongs to the nuclear hormone receptor family. NR1 subfamily. In terms of assembly, heterodimer of NR1I3 and RXR. Interacts with PSMC4. Interacts with ECT2. Directly interacts with DNAJC7; this complex may also include HSP90. Interacts with CRY1. Interacts with CRY2 in a ligand-dependent manner. In terms of processing, phosphorylated at Thr-38 by PKC, dephosphorylation of Thr-38 is required for nuclear translocation and activation.

It localises to the nucleus. The protein localises to the cytoplasm. The protein resides in the cytoskeleton. Its function is as follows. Binds and transactivates the retinoic acid response elements that control expression of the retinoic acid receptor beta 2 and alcohol dehydrogenase 3 genes. Transactivates both the phenobarbital responsive element module of the human CYP2B6 gene and the CYP3A4 xenobiotic response element. This is Nuclear receptor subfamily 1 group I member 3 (NR1I3) from Pusa sibirica (Baikal seal).